The primary structure comprises 338 residues: Eukaryotic translation initiation factor 3 subunit H (338 aa).

The MPN domain occupies Val-22–Ala-154.

This sequence belongs to the eIF-3 subunit H family. Component of the eukaryotic translation initiation factor 3 (eIF-3) complex. The eIF-3 complex interacts with pix. Interacts with mxt.

Its subcellular location is the cytoplasm. Its function is as follows. Component of the eukaryotic translation initiation factor 3 (eIF-3) complex, which is involved in protein synthesis of a specialized repertoire of mRNAs and, together with other initiation factors, stimulates binding of mRNA and methionyl-tRNAi to the 40S ribosome. The eIF-3 complex specifically targets and initiates translation of a subset of mRNAs involved in cell proliferation. The protein is Eukaryotic translation initiation factor 3 subunit H of Drosophila erecta (Fruit fly).